The primary structure comprises 319 residues: Urease accessory protein UreD (319 aa).

The disordered stretch occupies residues 284 to 319 (RLSTPQPPREWPLQEEGTFSNERFTKDHQSPSASPH).

This sequence belongs to the UreD family. UreD, UreF and UreG form a complex that acts as a GTP-hydrolysis-dependent molecular chaperone, activating the urease apoprotein by helping to assemble the nickel containing metallocenter of UreC. The UreE protein probably delivers the nickel.

It is found in the cytoplasm. Its function is as follows. Required for maturation of urease via the functional incorporation of the urease nickel metallocenter. In Prochlorococcus marinus (strain MIT 9313), this protein is Urease accessory protein UreD.